A 271-amino-acid chain; its full sequence is DNA repair protein RecO (271 aa).

The segment covering Val249–Thr264 has biased composition (basic and acidic residues). Residues Val249–Ala271 are disordered.

Belongs to the RecO family.

Its function is as follows. Involved in DNA repair and RecF pathway recombination. The protein is DNA repair protein RecO of Rhodococcus jostii (strain RHA1).